A 651-amino-acid polypeptide reads, in one-letter code: Meiotic expression up-regulated protein 6 (651 aa).

2 stretches are compositionally biased toward basic and acidic residues: residues 1 to 12 (MSYEGREERPEQ) and 21 to 30 (VSEHNEHDSG). Residues 1–102 (MSYEGREERP…EKKSKKKAKD (102 aa)) form a disordered region. Residues 72–83 (TVDNIDPADDDP) show a composition bias toward acidic residues. A compositionally biased stretch (basic and acidic residues) spans 90 to 102 (KVEEKKSKKKAKD). The PH domain occupies 194–261 (CRGLLFYSKS…WITDLKNAIA (68 aa)). Disordered stretches follow at residues 365–430 (TVEA…GTPI), 468–514 (VATP…KGGN), and 587–630 (TIKP…QMPQ). 2 stretches are compositionally biased toward polar residues: residues 410-429 (ESTSTQNVEQASTQNDNGTP) and 478-490 (PSTAATNEESVVS). A compositionally biased stretch (basic residues) spans 497 to 514 (KKAGKKHHRHHKKKKGGN). The segment covering 587–604 (TIKPETPLTPTTTPTPRT) has biased composition (low complexity).

The protein is Meiotic expression up-regulated protein 6 (meu6) of Schizosaccharomyces pombe (strain 972 / ATCC 24843) (Fission yeast).